The sequence spans 77 residues: Small ribosomal subunit protein uS17 (77 aa).

This sequence belongs to the universal ribosomal protein uS17 family. As to quaternary structure, part of the 30S ribosomal subunit.

In terms of biological role, one of the primary rRNA binding proteins, it binds specifically to the 5'-end of 16S ribosomal RNA. This chain is Small ribosomal subunit protein uS17, found in Rickettsia rickettsii (strain Sheila Smith).